A 217-amino-acid polypeptide reads, in one-letter code: ATP phosphoribosyltransferase (217 aa).

Belongs to the ATP phosphoribosyltransferase family. Short subfamily. In terms of assembly, heteromultimer composed of HisG and HisZ subunits.

It is found in the cytoplasm. It catalyses the reaction 1-(5-phospho-beta-D-ribosyl)-ATP + diphosphate = 5-phospho-alpha-D-ribose 1-diphosphate + ATP. It participates in amino-acid biosynthesis; L-histidine biosynthesis; L-histidine from 5-phospho-alpha-D-ribose 1-diphosphate: step 1/9. Catalyzes the condensation of ATP and 5-phosphoribose 1-diphosphate to form N'-(5'-phosphoribosyl)-ATP (PR-ATP). Has a crucial role in the pathway because the rate of histidine biosynthesis seems to be controlled primarily by regulation of HisG enzymatic activity. This chain is ATP phosphoribosyltransferase, found in Burkholderia ambifaria (strain MC40-6).